The sequence spans 436 residues: UDP-N-acetylglucosamine 1-carboxyvinyltransferase 1 (436 aa).

Residue 22-23 participates in phosphoenolpyruvate binding; the sequence is KN. Position 93 (Arg93) interacts with UDP-N-acetyl-alpha-D-glucosamine. The active-site Proton donor is Cys117. Cys117 is subject to 2-(S-cysteinyl)pyruvic acid O-phosphothioketal. UDP-N-acetyl-alpha-D-glucosamine is bound by residues 122–126, Asp306, and Val328; that span reads RPIDQ.

Belongs to the EPSP synthase family. MurA subfamily.

The protein resides in the cytoplasm. The enzyme catalyses phosphoenolpyruvate + UDP-N-acetyl-alpha-D-glucosamine = UDP-N-acetyl-3-O-(1-carboxyvinyl)-alpha-D-glucosamine + phosphate. The protein operates within cell wall biogenesis; peptidoglycan biosynthesis. Cell wall formation. Adds enolpyruvyl to UDP-N-acetylglucosamine. This is UDP-N-acetylglucosamine 1-carboxyvinyltransferase 1 from Bacillus licheniformis (strain ATCC 14580 / DSM 13 / JCM 2505 / CCUG 7422 / NBRC 12200 / NCIMB 9375 / NCTC 10341 / NRRL NRS-1264 / Gibson 46).